A 119-amino-acid chain; its full sequence is MGIVVKSFKDQFSSDERLKESNNIIAKYPDRIPVIIEKYSNADLPDMEKNKYLVPRDMTVGHFIHMLSKRMQLDPSKALFVFVHNTLPQTASRMDSLYNTFKEEDGFLYMCYSTEKTFG.

Residue G119 is the site of Phosphatidylethanolamine amidated glycine attachment.

The protein belongs to the ATG8 family. In terms of assembly, interacts with ATG4. Interacts with ATI1. Gly-119 forms then a thioester bond with the 'Cys-558' of ATG7 (E1-like activating enzyme) before being transferred to the 'Cys-258' of ATG3 (the specific E2 conjugating enzyme), in order to be finally amidated with phosphatidylethanolamine. This lipid modification anchors ATG8 to autophagosomes. As to expression, constitutively expressed.

It localises to the cytoplasmic vesicle. It is found in the autophagosome membrane. The protein localises to the vacuole membrane. The protein resides in the cytoplasm. Its subcellular location is the cytoskeleton. In terms of biological role, ubiquitin-like modifier involved in autophagosomes formation. May mediate the delivery of the autophagosomes to the vacuole via the microtubule cytoskeleton. The sequence is that of Autophagy-related protein 8h (ATG8H) from Arabidopsis thaliana (Mouse-ear cress).